We begin with the raw amino-acid sequence, 440 residues long: V-type ATP synthase beta chain (440 aa).

This sequence belongs to the ATPase alpha/beta chains family.

Produces ATP from ADP in the presence of a proton gradient across the membrane. The V-type beta chain is a regulatory subunit. The protein is V-type ATP synthase beta chain of Geotalea uraniireducens (strain Rf4) (Geobacter uraniireducens).